The primary structure comprises 258 residues: Ribonuclease HII (258 aa).

Residues 1 to 20 (MRVAPSGGPPHHHAMIRATP) form a disordered region. The span at 10–20 (PHHHAMIRATP) shows a compositional bias: basic residues. The region spanning 48–236 (WPVAGCDEVG…VVAARERHRA (189 aa)) is the RNase H type-2 domain. The a divalent metal cation site is built by aspartate 54, glutamate 55, and aspartate 145.

This sequence belongs to the RNase HII family. It depends on Mn(2+) as a cofactor. Mg(2+) is required as a cofactor.

It is found in the cytoplasm. It carries out the reaction Endonucleolytic cleavage to 5'-phosphomonoester.. Endonuclease that specifically degrades the RNA of RNA-DNA hybrids. The protein is Ribonuclease HII of Nitrobacter winogradskyi (strain ATCC 25391 / DSM 10237 / CIP 104748 / NCIMB 11846 / Nb-255).